Reading from the N-terminus, the 34-residue chain is uncharacterized protein (34 aa).

Residues 1 to 34 (MRLRRLFKQPSTRVLGVTNCPRQQGHQKRREQPD) are disordered. A compositionally biased stretch (basic residues) spans 25–34 (GHQKRREQPD).

This is an uncharacterized protein from Schizosaccharomyces pombe (strain 972 / ATCC 24843) (Fission yeast).